Reading from the N-terminus, the 1806-residue chain is SH3 and multiple ankyrin repeat domains protein 3 (1806 aa).

The segment at 76–150 (MDGPGASAVV…KFLDEERLLQ (75 aa)) is intramolecular interaction with the ANK repeats. Tyr-197 is subject to Phosphotyrosine. ANK repeat units lie at residues 223–253 (SGECPLSLAAQLDNATDLLKVLKNGGAHLDF), 257–286 (DGLTAVHCATRQRNAAALTTLLDLGASPDY), 290–320 (RGLTPLYHSALGGGDALCCELLLHDHAQLGI), 324–353 (NGWQEIHQACRFGHVQHLEHLLFYGADMGA), 357–386 (SGNTALHICALYNQESCARVLLFRGANRDV), and 390–420 (NSQTAFQVAIIAGNFELAEVIKTHKDSDVVP). Residues 407-416 (AEVIKTHKDS) are compositionally biased toward basic and acidic residues. The segment at 407-467 (AEVIKTHKDS…AQPAASPGPS (61 aa)) is disordered. Positions 439–461 (LASPRPLQRSASDINLKGEAQPA) are enriched in pro residues. Residues Ser-448, Ser-450, Ser-463, Ser-470, and Ser-558 each carry the phosphoserine modification. The 60-residue stretch at 546–605 (VPGRKFIAVKAHSPQGEGEIPLHRGEAVKVLSIGEGGFWEGTVKGRTGWFPADCVEEVQM) folds into the SH3 domain. Tyr-631 is subject to Phosphotyrosine. In terms of domain architecture, PDZ spans 646 to 740 (VAVLQKRDHE…RLVMKVVSVT (95 aa)). 2 disordered regions span residues 665 to 689 (KAETPIEEFTPTPAFPALQYLESVD) and 760 to 853 (PSTT…KGIP). The segment at 753–760 (PPPPKRAP) is required for interaction with ABI1. Ser-770 carries the phosphoserine modification. A compositionally biased stretch (pro residues) spans 813-845 (ATVKQRPTSRRITPAEISSLFERQGLPGPEKLP). Residues Ser-857, Ser-866, and Ser-877 each carry the phosphoserine modification. The disordered stretch occupies residues 871 to 1021 (RFPRSTSMQD…FSASLFAPSK (151 aa)). A compositionally biased stretch (pro residues) spans 906–915 (DSGPPPAFSP). Residues Ser-966 and Ser-973 each carry the phosphoserine modification. Thr-988 carries the phosphothreonine modification. A compositionally biased stretch (gly residues) spans 993–1013 (PKRRPRPPGPDSPYANLGAFS). Tyr-1006 bears the Phosphotyrosine mark. Asymmetric dimethylarginine is present on Arg-1041. The span at 1115–1124 (PGADLPSLQP) shows a compositional bias: low complexity. Disordered stretches follow at residues 1115–1460 (PGAD…MSTL), 1475–1525 (ADGH…HHAA), and 1546–1584 (SKLWGDPVESRGLPGPEDDKPTVISELSSRLQQLNKDTR). The span at 1173 to 1193 (TGKPLDPSSPLALALAARERA) shows a compositional bias: basic and acidic residues. At Thr-1204 the chain carries Phosphothreonine. 4 positions are modified to phosphoserine: Ser-1208, Ser-1233, Ser-1237, and Ser-1240. Residues 1251–1261 (EAEKVPREERK) are compositionally biased toward pro residues. Residue Thr-1309 is modified to Phosphothreonine. Ser-1328 bears the Phosphoserine mark. Basic and acidic residues predominate over residues 1360–1370 (LPPAQLSSSDE). Composition is skewed to low complexity over residues 1371–1392 (ETREELARIGLVPPPEEFANGV) and 1444–1460 (HLETTSTISTVSSMSTL). An SH3-binding motif is present at residues 1485–1491 (PPVPPKP). At Ser-1495 the chain carries Phosphoserine. Residues 1495 to 1505 (SPLGKGPVTFR) are compositionally biased toward polar residues. The stretch at 1569–1589 (ISELSSRLQQLNKDTRSLGEE) forms a coiled coil. Ser-1585, Ser-1596, Ser-1604, and Ser-1614 each carry phosphoserine. Residues 1627-1637 (PGGPGGGASYS) are compositionally biased toward low complexity. Positions 1627–1664 (PGGPGGGASYSVRPSGRYPVARRAPSPVKPASLERVEG) are disordered. Pro residues predominate over residues 1638–1657 (VRPSGRYPVARRAPSPVKPA). Ser-1709, Ser-1711, and Ser-1713 each carry phosphoserine. One can recognise an SAM domain in the interval 1743-1806 (WSKFDVGDWL…ERALRQLDGS (64 aa)).

In terms of assembly, may homomultimerize via its SAM domain. Interacts with BAIAP2, DBNL and SLC17A7/VGLUT1. Interacts with DLGAP1/GKAP, GRM1/MGLUR1, GRM5/MGLUR5 and LZTS3 C-termini via its PDZ domain. Interacts with ABI1, HOMER1, HOMER2, HOMER3 and CTTN/cortactin SH3 domain. Is part of a complex with DLG4/PSD-95 and DLGAP1/GKAP. Interacts (via PDZ domain) with the GRIA1 subunit of the AMPA receptor (via PDZ-binding motif). Interacts with WASF1 and CYFIP2; the interactions mediate the association of SHANK3 with the WAVE1 complex. Interacts with ARPC2; the interaction probably mediates the association of SHANK3 with the Arp2/3 complex. Interacts (via ANK repeats) with SHARPIN and SPTAN1. Interacts (via PDZ domain) with ARHGAP44 (probably via PDZ-binding motif); the interaction takes place in dendritic spines and promotes GRIA1 exocytosis. Interacts with CAMK2A. Interacts with DIP2A. Interacts with ADGRL3. In terms of tissue distribution, expressed in the cerebral cortex and the cerebellum.

The protein resides in the cytoplasm. The protein localises to the postsynaptic density. It is found in the cell projection. It localises to the dendritic spine. Major scaffold postsynaptic density protein which interacts with multiple proteins and complexes to orchestrate the dendritic spine and synapse formation, maturation and maintenance. Interconnects receptors of the postsynaptic membrane including NMDA-type and metabotropic glutamate receptors via complexes with GKAP/PSD-95 and HOMER, respectively, and the actin-based cytoskeleton. Plays a role in the structural and functional organization of the dendritic spine and synaptic junction through the interaction with Arp2/3 and WAVE1 complex as well as the promotion of the F-actin clusters. By way of this control of actin dynamics, participates in the regulation of developing neurons growth cone motility and the NMDA receptor-signaling. Also modulates GRIA1 exocytosis and GRM5/MGLUR5 expression and signaling to control the AMPA and metabotropic glutamate receptor-mediated synaptic transmission and plasticity. May be required at an early stage of synapse formation and be inhibited by IGF1 to promote synapse maturation. This is SH3 and multiple ankyrin repeat domains protein 3 (SHANK3) from Homo sapiens (Human).